The primary structure comprises 659 residues: Exoribonuclease 2 (659 aa).

Positions 189–531 constitute an RNB domain; the sequence is RKDLTALHFV…NHRLIKACIA (343 aa). The 83-residue stretch at 576–658 folds into the S1 motif domain; that stretch reads KPEFQAEVQD…ETRSLIGNLV (83 aa).

This sequence belongs to the RNR ribonuclease family. RNase II subfamily.

The protein resides in the cytoplasm. The catalysed reaction is Exonucleolytic cleavage in the 3'- to 5'-direction to yield nucleoside 5'-phosphates.. Functionally, involved in mRNA degradation. Hydrolyzes single-stranded polyribonucleotides processively in the 3' to 5' direction. The chain is Exoribonuclease 2 from Actinobacillus succinogenes (strain ATCC 55618 / DSM 22257 / CCUG 43843 / 130Z).